A 102-amino-acid chain; its full sequence is Acylphosphatase 1 (102 aa).

In terms of domain architecture, Acylphosphatase-like spans 12 to 100; the sequence is TRLVRVRGRV…PRFDRFEQLP (89 aa). Catalysis depends on residues arginine 27 and asparagine 45.

The protein belongs to the acylphosphatase family.

The catalysed reaction is an acyl phosphate + H2O = a carboxylate + phosphate + H(+). The polypeptide is Acylphosphatase 1 (acyP1) (Ralstonia nicotianae (strain ATCC BAA-1114 / GMI1000) (Ralstonia solanacearum)).